The chain runs to 192 residues: Probable nicotinate-nucleotide adenylyltransferase (192 aa).

The protein belongs to the NadD family.

It carries out the reaction nicotinate beta-D-ribonucleotide + ATP + H(+) = deamido-NAD(+) + diphosphate. Its pathway is cofactor biosynthesis; NAD(+) biosynthesis; deamido-NAD(+) from nicotinate D-ribonucleotide: step 1/1. Catalyzes the reversible adenylation of nicotinate mononucleotide (NaMN) to nicotinic acid adenine dinucleotide (NaAD). The polypeptide is Probable nicotinate-nucleotide adenylyltransferase (Bradyrhizobium sp. (strain BTAi1 / ATCC BAA-1182)).